A 419-amino-acid polypeptide reads, in one-letter code: Protein farnesyltransferase subunit beta (419 aa).

PFTB repeat units lie at residues 68-109 (EDNT…ITLG), 119-160 (RNKL…SVLN), 167-208 (IKNV…ILIG), 215-256 (LPRL…ALLQ), and 329-371 (SIAL…SLCQ). (2E,6E)-farnesyl diphosphate contacts are provided by residues 193 to 196 (HGGY) and 235 to 238 (RTNK). Positions 241 and 243 each coordinate Zn(2+). 244-247 (YSFW) contacts (2E,6E)-farnesyl diphosphate. A Zn(2+)-binding site is contributed by His359.

The protein belongs to the protein prenyltransferase subunit beta family. Heterodimer of FTA and FTB. It depends on Zn(2+) as a cofactor.

It carries out the reaction L-cysteinyl-[protein] + (2E,6E)-farnesyl diphosphate = S-(2E,6E)-farnesyl-L-cysteinyl-[protein] + diphosphate. Catalyzes the transfer of a farnesyl moiety from farnesyl diphosphate to a cysteine at the fourth position from the C-terminus of several proteins. The beta subunit FTB is responsible for peptide-binding. This is Protein farnesyltransferase subunit beta (FTB) from Pisum sativum (Garden pea).